The following is a 596-amino-acid chain: Mitoguardin 2 (596 aa).

2 helical membrane-spanning segments follow: residues 11-31 (IMQA…STFG) and 40-60 (LSPS…ALAL). 2 disordered regions span residues 67–158 (RRGR…AAWE) and 576–596 (ALPK…GQQD). Polar residues predominate over residues 110–123 (MSPSTRSNDTLSGV). Residues 124–140 (SSIAQSKHSSSSHSIAS) show a composition bias toward low complexity. Composition is skewed to polar residues over residues 143-152 (VPSSPNQSVN) and 583-596 (QAES…GQQD).

It belongs to the mitoguardin family. Homodimer and heterodimer; forms heterodimers with miga1.

It localises to the mitochondrion outer membrane. Functionally, regulator of mitochondrial fusion: acts by forming homo- and heterodimers at the mitochondrial outer membrane and facilitating the formation of pld6/MitoPLD dimers. May act by regulating phospholipid metabolism via pld6/MitoPLD. This Danio rerio (Zebrafish) protein is Mitoguardin 2.